The following is a 129-amino-acid chain: Flagellar assembly factor FliW (129 aa).

Belongs to the FliW family. In terms of assembly, interacts with translational regulator CsrA and flagellin(s).

It is found in the cytoplasm. In terms of biological role, acts as an anti-CsrA protein, binds CsrA and prevents it from repressing translation of its target genes, one of which is flagellin. Binds to flagellin and participates in the assembly of the flagellum. The polypeptide is Flagellar assembly factor FliW (Campylobacter jejuni subsp. doylei (strain ATCC BAA-1458 / RM4099 / 269.97)).